The sequence spans 122 residues: Large ribosomal subunit protein uL14c (122 aa).

This sequence belongs to the universal ribosomal protein uL14 family. Part of the 50S ribosomal subunit.

Its subcellular location is the plastid. It localises to the chloroplast. Binds to 23S rRNA. This Chlorokybus atmophyticus (Soil alga) protein is Large ribosomal subunit protein uL14c.